The chain runs to 670 residues: Probable Na(+)/H(+) antiporter nhx-3 (670 aa).

Transmembrane regions (helical) follow at residues 41-61 (VYVITTWLLVASLAKILFNLM), 73-93 (LLIIVGLGLGYFLNQTTLSGV), 97-117 (SHAFFLYLLPPIIFDAGYFMP), 129-149 (LVFSVLGTLWNTFAIGGSLLI), 164-184 (EILVFSALISAVDPVAVIAIF), 192-212 (FLFINVFGEALFNDGVTVVLY), 235-255 (GLSFFVVALGGAAIGIIFAIA), and 268-288 (ILAPVFIFLLPYMAYLTAEMV). An N-linked (GlcNAc...) asparagine glycan is attached at Asn310. Transmembrane regions (helical) follow at residues 325-345 (MLAQCSETVIFMFLGLSTLTS), 351-371 (FIFIGATLVFCLIYRAIGIIV), 390-410 (FILSYGGLRGAIAYGLVVSIP), and 418-438 (MFITTTICVIYFTVFLQGITI). Residues 648–670 (GDLKGHCGTSRKPKHSMFELRHV) form a disordered region.

It belongs to the monovalent cation:proton antiporter 1 (CPA1) transporter (TC 2.A.36) family. Phosphorylated. In terms of tissue distribution, expressed in hypodermal cells of the main body syncytium, ut1 cells of the vulva and the spermathecal junction cell.

The protein localises to the endomembrane system. In terms of biological role, plays a role in epithelial membrane transport processes. The sequence is that of Probable Na(+)/H(+) antiporter nhx-3 (nhx-3) from Caenorhabditis elegans.